Reading from the N-terminus, the 614-residue chain is RNA polymerase sigma factor RpoD (614 aa).

Positions 168–245 (DPDDNIAAPT…PEEKRSYPQG (78 aa)) are disordered. The span at 193 to 209 (EADDDEEESEGGDDEEE) shows a compositional bias: acidic residues. Residues 215–232 (TRSSQPSVSVRYPSSFSD) are compositionally biased toward polar residues. The tract at residues 380–450 (MVEANLRLVI…TRSIADQART (71 aa)) is sigma-70 factor domain-2. An Interaction with polymerase core subunit RpoC motif is present at residues 404 to 407 (DLIQ). The tract at residues 459 to 535 (ETINKLNRIS…DSTMQSPIYV (77 aa)) is sigma-70 factor domain-3. A sigma-70 factor domain-4 region spans residues 548–601 (VLSGLTAREAKVLRMRFGIDMNTDHTLEEVGKQFDVTRERIRQIEAKAWRKLRH). The segment at residues 574–593 (LEEVGKQFDVTRERIRQIEA) is a DNA-binding region (H-T-H motif).

It belongs to the sigma-70 factor family. RpoD/SigA subfamily. As to quaternary structure, interacts transiently with the RNA polymerase catalytic core.

The protein localises to the cytoplasm. In terms of biological role, sigma factors are initiation factors that promote the attachment of RNA polymerase to specific initiation sites and are then released. This sigma factor is the primary sigma factor during exponential growth. This Pseudomonas putida (Arthrobacter siderocapsulatus) protein is RNA polymerase sigma factor RpoD.